The chain runs to 501 residues: uncharacterized protein (501 aa).

Catalysis depends on glutamate 236, which acts as the Proton donor. The Nucleophile role is filled by glutamate 333.

Belongs to the glycosyl hydrolase 5 (cellulase A) family.

Its subcellular location is the mitochondrion intermembrane space. This is an uncharacterized protein from Saccharomyces cerevisiae (strain ATCC 204508 / S288c) (Baker's yeast).